Here is a 177-residue protein sequence, read N- to C-terminus: PLAC8-like protein 1 (177 aa).

The protein belongs to the cornifelin family.

This is PLAC8-like protein 1 (Plac8l1) from Mus musculus (Mouse).